A 229-amino-acid chain; its full sequence is Large ribosomal subunit protein uL1 (229 aa).

Belongs to the universal ribosomal protein uL1 family. As to quaternary structure, part of the 50S ribosomal subunit.

In terms of biological role, binds directly to 23S rRNA. The L1 stalk is quite mobile in the ribosome, and is involved in E site tRNA release. Functionally, protein L1 is also a translational repressor protein, it controls the translation of the L11 operon by binding to its mRNA. This Streptococcus equi subsp. equi (strain 4047) protein is Large ribosomal subunit protein uL1.